A 103-amino-acid chain; its full sequence is MILVNTDYISKKELETLTIVKGSTIQSKHLGKDILSGFKTLVGGELTAYSDMMNEARAIATKRMVAEAQGVGADAIINIRYASSAVMGGAAEIMVYGTAVKFV.

The protein belongs to the UPF0145 family.

In Alkaliphilus metalliredigens (strain QYMF), this protein is UPF0145 protein Amet_0532.